Consider the following 401-residue polypeptide: Homocysteine-responsive endoplasmic reticulum-resident ubiquitin-like domain member 2 protein (401 aa).

The 80-residue stretch at 10 to 89 (VTLIIKAPNQ…HMVHLVCASR (80 aa)) folds into the Ubiquitin-like domain. Residues 87–137 (ASRSPPSSPKSSTDGESHGALASSTNSNSDHSDSTTPSPSQESLSLVAGSS) are disordered. 2 stretches are compositionally biased toward low complexity: residues 88–98 (SRSPPSSPKSS) and 109–126 (SSTNSNSDHSDSTTPSPS). A helical transmembrane segment spans residues 299-319 (FIMVMGAMLLVYLHQAGWFPF).

It is found in the membrane. In terms of biological role, could be involved in the unfolded protein response (UPR) pathway. This chain is Homocysteine-responsive endoplasmic reticulum-resident ubiquitin-like domain member 2 protein (Herpud2), found in Rattus norvegicus (Rat).